Consider the following 113-residue polypeptide: Hydrogenase maturation factor HypA (113 aa).

H2 contacts Ni(2+). Zn(2+)-binding residues include C73, C76, C89, and C92.

Belongs to the HypA/HybF family.

Involved in the maturation of [NiFe] hydrogenases. Required for nickel insertion into the metal center of the hydrogenase. The polypeptide is Hydrogenase maturation factor HypA (Legionella pneumophila subsp. pneumophila (strain Philadelphia 1 / ATCC 33152 / DSM 7513)).